The primary structure comprises 261 residues: tRNA pseudouridine synthase A (261 aa).

Residue D52 is the Nucleophile of the active site. A substrate-binding site is contributed by Y110.

Belongs to the tRNA pseudouridine synthase TruA family. In terms of assembly, homodimer.

The catalysed reaction is uridine(38/39/40) in tRNA = pseudouridine(38/39/40) in tRNA. Functionally, formation of pseudouridine at positions 38, 39 and 40 in the anticodon stem and loop of transfer RNAs. The polypeptide is tRNA pseudouridine synthase A (Coxiella burnetii (strain CbuK_Q154) (Coxiella burnetii (strain Q154))).